The sequence spans 742 residues: Two-component response regulator-like PRR37 (742 aa).

A Response regulatory domain is found at 63–181 (KVLLVDSDDS…ELKNLWQHVW (119 aa)). The span at 186 to 195 (SSSGSGSESG) shows a compositional bias: low complexity. 6 disordered regions span residues 186 to 249 (SSSG…SWTK), 290 to 346 (PCTS…PLQN), 375 to 402 (DAQQ…NRDN), 478 to 570 (MKSN…VQSN), 590 to 671 (NGGS…GNDM), and 697 to 742 (NFGK…AADR). A compositionally biased stretch (polar residues) spans 236-248 (DNGSGTQAQSSWT). Basic and acidic residues predominate over residues 299 to 313 (KQKETNDDFKGKDLE). A compositionally biased stretch (polar residues) spans 318-330 (RNLNTAYQSSPNE). Residues 331-341 (RSIKPTDRRNE) show a composition bias toward basic and acidic residues. The segment covering 380–390 (ARATNAPNCSS) has biased composition (polar residues). Low complexity predominate over residues 490–502 (GSNGSSNNNDMGS). Polar residues predominate over residues 503–512 (TTKNVVTKPS). A compositionally biased stretch (low complexity) spans 618–634 (NGSNSGSNNGSNGQNGS). Gly residues predominate over residues 656–667 (GPGGGNGSGSGS). A CCT domain is found at 682-724 (RVAAVIKFRQKRKERNFGKKVRYQSRKRLAEQRPRVRGQFVRQ). Residues 697-708 (NFGKKVRYQSRK) show a composition bias toward basic residues. The segment covering 719-731 (GQFVRQAVQDQQQ) has biased composition (low complexity).

Belongs to the ARR-like family.

It is found in the nucleus. In terms of biological role, controls photoperiodic flowering response. Seems to be one of the component of the circadian clock. Expression of several members of the ARR-like family is controlled by circadian rhythm. The particular coordinated sequential expression of PRR73, PRR37, PRR95, PRR59 and PPR1 result to circadian waves that may be at the basis of the endogenous circadian clock. The protein is Two-component response regulator-like PRR37 (PRR37) of Oryza sativa subsp. indica (Rice).